A 217-amino-acid polypeptide reads, in one-letter code: Pyrophosphatase PpaX (217 aa).

Asp-11 acts as the Nucleophile in catalysis.

Belongs to the HAD-like hydrolase superfamily. PpaX family. It depends on Mg(2+) as a cofactor.

The catalysed reaction is diphosphate + H2O = 2 phosphate + H(+). Hydrolyzes pyrophosphate formed during P-Ser-HPr dephosphorylation by HPrK/P. Might play a role in controlling the intracellular pyrophosphate pool. The chain is Pyrophosphatase PpaX from Listeria innocua serovar 6a (strain ATCC BAA-680 / CLIP 11262).